The sequence spans 545 residues: CTP synthase (545 aa).

The amidoligase domain stretch occupies residues 1–266 (MTTRYIFVTG…DELVVKRFGI (266 aa)). Residue S14 participates in CTP binding. S14 contacts UTP. ATP is bound by residues 15-20 (SLGKGI) and D72. Residues D72 and E140 each contribute to the Mg(2+) site. CTP contacts are provided by residues 147 to 149 (DIE), 187 to 192 (KTKPTQ), and K223. UTP-binding positions include 187-192 (KTKPTQ) and K223. Residue 239 to 241 (KDV) coordinates ATP. Residues 291–542 (TIGMVGKYIE…VAAATAYQKR (252 aa)) enclose the Glutamine amidotransferase type-1 domain. G352 contacts L-glutamine. C379 acts as the Nucleophile; for glutamine hydrolysis in catalysis. L-glutamine-binding positions include 380-383 (LGLQ), E403, and R470. Active-site residues include H515 and E517.

Belongs to the CTP synthase family. As to quaternary structure, homotetramer.

The enzyme catalyses UTP + L-glutamine + ATP + H2O = CTP + L-glutamate + ADP + phosphate + 2 H(+). The catalysed reaction is L-glutamine + H2O = L-glutamate + NH4(+). It catalyses the reaction UTP + NH4(+) + ATP = CTP + ADP + phosphate + 2 H(+). Its pathway is pyrimidine metabolism; CTP biosynthesis via de novo pathway; CTP from UDP: step 2/2. Allosterically activated by GTP, when glutamine is the substrate; GTP has no effect on the reaction when ammonia is the substrate. The allosteric effector GTP functions by stabilizing the protein conformation that binds the tetrahedral intermediate(s) formed during glutamine hydrolysis. Inhibited by the product CTP, via allosteric rather than competitive inhibition. Catalyzes the ATP-dependent amination of UTP to CTP with either L-glutamine or ammonia as the source of nitrogen. Regulates intracellular CTP levels through interactions with the four ribonucleotide triphosphates. The sequence is that of CTP synthase from Shewanella sediminis (strain HAW-EB3).